The sequence spans 85 residues: Small ribosomal subunit protein uS17 (85 aa).

It belongs to the universal ribosomal protein uS17 family. Part of the 30S ribosomal subunit.

Its function is as follows. One of the primary rRNA binding proteins, it binds specifically to the 5'-end of 16S ribosomal RNA. This is Small ribosomal subunit protein uS17 from Citrifermentans bemidjiense (strain ATCC BAA-1014 / DSM 16622 / JCM 12645 / Bem) (Geobacter bemidjiensis).